A 101-amino-acid chain; its full sequence is Iron-sulfur cluster assembly protein CyaY (101 aa).

Belongs to the frataxin family.

Involved in iron-sulfur (Fe-S) cluster assembly. May act as a regulator of Fe-S biogenesis. The sequence is that of Iron-sulfur cluster assembly protein CyaY from Actinobacillus pleuropneumoniae serotype 5b (strain L20).